The sequence spans 142 residues: uncharacterized protein (142 aa).

An N-terminal signal peptide occupies residues 1 to 26; the sequence is MITEFIKSFLLFFFLPFFLSMPMIFA.

This is an uncharacterized protein from Schizosaccharomyces pombe (strain 972 / ATCC 24843) (Fission yeast).